Reading from the N-terminus, the 36-residue chain is Photosystem I reaction center subunit VIII (36 aa).

Residues 8–28 (SFFVPLVCLVFPAIAMAFLFV) traverse the membrane as a helical segment.

The protein belongs to the PsaI family.

It is found in the plastid. The protein localises to the chloroplast thylakoid membrane. In terms of biological role, may help in the organization of the PsaL subunit. The protein is Photosystem I reaction center subunit VIII of Chara vulgaris (Common stonewort).